The following is a 147-amino-acid chain: Basic phospholipase A2 beta-bungarotoxin A2 chain (147 aa).

A signal peptide spans 1 to 19; it reads MYPAHLLVLSAVCVSLLGA. The propeptide occupies 20-27; sequence ANIPPYPL. Intrachain disulfides connect Cys-54/Cys-146, Cys-56/Cys-72, Cys-71/Cys-127, Cys-78/Cys-120, Cys-88/Cys-113, and Cys-106/Cys-118. Tyr-55, Gly-57, and Gly-59 together coordinate Ca(2+). The active site involves His-75. Asp-76 is a Ca(2+) binding site. The active site involves Asp-121.

Belongs to the phospholipase A2 family. Group I subfamily. D49 sub-subfamily. As to quaternary structure, heterodimer; disulfide-linked. The A chains have phospholipase A2 activity and the B chains show homology with the basic protease inhibitors. Ca(2+) serves as cofactor. As to expression, expressed by the venom gland.

Its subcellular location is the secreted. It catalyses the reaction a 1,2-diacyl-sn-glycero-3-phosphocholine + H2O = a 1-acyl-sn-glycero-3-phosphocholine + a fatty acid + H(+). Its function is as follows. Snake venom phospholipase A2 (PLA2) that inhibits neuromuscular transmission by blocking acetylcholine release from the nerve termini. PLA2 catalyzes the calcium-dependent hydrolysis of the 2-acyl groups in 3-sn-phosphoglycerides. In Bungarus caeruleus (Indian krait), this protein is Basic phospholipase A2 beta-bungarotoxin A2 chain.